The primary structure comprises 279 residues: Tryptophan synthase alpha chain (279 aa).

Residues glutamate 50 and aspartate 61 each act as proton acceptor in the active site.

Belongs to the TrpA family. As to quaternary structure, tetramer of two alpha and two beta chains.

The catalysed reaction is (1S,2R)-1-C-(indol-3-yl)glycerol 3-phosphate + L-serine = D-glyceraldehyde 3-phosphate + L-tryptophan + H2O. It functions in the pathway amino-acid biosynthesis; L-tryptophan biosynthesis; L-tryptophan from chorismate: step 5/5. The alpha subunit is responsible for the aldol cleavage of indoleglycerol phosphate to indole and glyceraldehyde 3-phosphate. This is Tryptophan synthase alpha chain from Brucella anthropi (strain ATCC 49188 / DSM 6882 / CCUG 24695 / JCM 21032 / LMG 3331 / NBRC 15819 / NCTC 12168 / Alc 37) (Ochrobactrum anthropi).